The sequence spans 433 residues: Coiled-coil domain-containing protein 71 (433 aa).

Ser-125 carries the phosphoserine modification. Disordered regions lie at residues Leu-204–Ala-256, Gln-284–Val-310, and Lys-325–Gln-396. 2 stretches are compositionally biased toward basic residues: residues Lys-216–Thr-230 and Val-288–Ala-306. Residues Lys-260–Lys-330 are a coiled coil.

The polypeptide is Coiled-coil domain-containing protein 71 (Ccdc71) (Mus musculus (Mouse)).